The chain runs to 530 residues: Cytochrome P450 monooxygenase ausG (530 aa).

The chain crosses the membrane as a helical span at residues 31 to 51 (LLVAYRLPGLLLLFSITIILF). Cys-470 lines the heme pocket.

Belongs to the cytochrome P450 family. It depends on heme as a cofactor.

Its subcellular location is the membrane. The protein operates within secondary metabolite biosynthesis; terpenoid biosynthesis. In terms of biological role, cytochrome P450 monooxygenase; part of the gene cluster B that mediates the biosynthesis of the fungal meroterpenoid acetoxydehydroaustin. The first step of the pathway is the synthesis of 3,5-dimethylorsellinic acid by the polyketide synthase ausA. 3,5-dimethylorsellinic acid is then prenylated by the polyprenyl transferase ausN. Further epoxidation by the FAD-dependent monooxygenase ausM and cyclization by the probable terpene cyclase ausL lead to the formation of protoaustinoid A. Protoaustinoid A is then oxidized to spiro-lactone preaustinoid A3 by the combined action of the FAD-binding monooxygenases ausB and ausC, and the dioxygenase ausE. Acid-catalyzed keto-rearrangement and ring contraction of the tetraketide portion of preaustinoid A3 by ausJ lead to the formation of preaustinoid A4. The aldo-keto reductase ausK, with the help of ausH, is involved in the next step by transforming preaustinoid A4 into isoaustinone which is in turn hydroxylated by the P450 monooxygenase ausI to form austinolide. The cytochrome P450 monooxygenase ausG then modifies austinolide to austinol. Austinol is further acetylated to austin by the O-acetyltransferase ausP, which spontaneously changes to dehydroaustin. The cytochrome P450 monooxygenase then converts dehydroaustin is into 7-dehydrodehydroaustin. The hydroxylation catalyzed by ausR permits the second O-acetyltransferase ausQ to add an additional acetyl group to the molecule, leading to the formation of acetoxydehydroaustin. Due to genetic rearrangements of the clusters and the subsequent loss of some enzymes, the end product of the Penicillium brasilianum austinoid biosynthesis clusters is acetoxydehydroaustin. The chain is Cytochrome P450 monooxygenase ausG from Penicillium brasilianum.